The chain runs to 459 residues: Peptidyl-prolyl cis-trans isomerase FKBP4 (459 aa).

The residue at position 1 (methionine 1) is an N-acetylmethionine; in peptidyl-prolyl cis-trans isomerase FKBP4; alternate. A disordered region spans residues 1-22; it reads MTAEETKAAESGAQSAPLRLEG. Threonine 2 is subject to N-acetylthreonine; in peptidyl-prolyl cis-trans isomerase FKBP4, N-terminally processed; partial. The 89-residue stretch at 50–138 folds into the PPIase FKBP-type 1 domain; the sequence is GDRVFVHYTG…VFEVELFEFK (89 aa). At threonine 143 the chain carries Phosphothreonine. The PPIase FKBP-type 2 domain maps to 167 to 253; it reads GALVEVALEG…KYEIHLKSFE (87 aa). Tyrosine 220 carries the post-translational modification Phosphotyrosine. The tract at residues 267–400 is interaction with tubulin; the sequence is LEQSTIVKER…AQLVVCQQRI (134 aa). 3 TPR repeats span residues 270–303, 319–352, and 354–386; these read STIV…LEYE, LASH…DSNN, and KGLF…YPSN. Position 282 is an N6-acetyllysine (lysine 282). Arginine 373 carries the post-translational modification Omega-N-methylarginine. The segment at 423–459 is disordered; the sequence is TKAKATVAAGDQPADAEMRDEPKNDVAGGQPQVEAEA.

As to quaternary structure, homodimer. Interacts with GLMN. Associates with HSP90AA1 and HSP70 in steroid hormone receptor complexes. Also interacts with peroxisomal phytanoyl-CoA alpha-hydroxylase (PHYH). Interacts with NR3C1 and dynein. Interacts with HSF1 in the HSP90 complex. Associates with tubulin. Interacts with MAPT/TAU. Interacts (via TPR domain) with S100A1, S100A2 and S100A6; the interaction is Ca(2+) dependent. Interaction with S100A1 and S100A2 (but not with S100A6) leads to inhibition of FKBP4-HSP90 interaction. Interacts with dynein; causes partially NR3C1 transport to the nucleus.

The protein resides in the cytoplasm. The protein localises to the cytosol. It localises to the mitochondrion. It is found in the nucleus. Its subcellular location is the cytoskeleton. The catalysed reaction is [protein]-peptidylproline (omega=180) = [protein]-peptidylproline (omega=0). Its activity is regulated as follows. Inhibited by FK506. Functionally, immunophilin protein with PPIase and co-chaperone activities. Component of unligated steroid receptors heterocomplexes through interaction with heat-shock protein 90 (HSP90). May play a role in the intracellular trafficking of heterooligomeric forms of steroid hormone receptors between cytoplasm and nuclear compartments. The isomerase activity controls neuronal growth cones via regulation of TRPC1 channel opening. Also acts as a regulator of microtubule dynamics by inhibiting MAPT/TAU ability to promote microtubule assembly. May have a protective role against oxidative stress in mitochondria. The polypeptide is Peptidyl-prolyl cis-trans isomerase FKBP4 (FKBP4) (Bos taurus (Bovine)).